The primary structure comprises 298 residues: CD-NTase-associated protein 6 (298 aa).

Residues 80–85 (GTGKTA) and 204–205 (RR) each bind ATP.

This sequence belongs to the AAA ATPase family. Homohexamer, forms a 1:1:6 CdnC:Cap7:Cap6 complex.

Regulates complex assembly in a CBASS antivirus system. CBASS (cyclic oligonucleotide-based antiphage signaling system) provides immunity against bacteriophage. The CD-NTase protein synthesizes cyclic nucleotides in response to infection; these serve as specific second messenger signals. The signals activate a diverse range of effectors, leading to bacterial cell death and thus abortive phage infection. A type III CBASS system. Expression of this CBASS system (Cap18-Cap6-Cap7-CdnC-CapW-Cap17) in a susceptible E.coli (strain MG1655) confers resistance to bacteriophage P1. Binds and disassembles an active CdnC:Cap7 complex, inhibiting the complex's ability to synthesize cyclic nucleotide second messengers. An AAA+-ATPase remodeler, in the absence of foreign threat Cap6 probably maintains the Cap7 protein in its open, inactive state. Once activated (presumably by a bacteriophage protein) Cap7 binds to and activates its cognate CD-NTase (CdnC in this bacteria) to synthesize a cyclic nucleotide second messenger which leads to abortive phage infection. In Escherichia coli (strain KTE188), this protein is CD-NTase-associated protein 6.